Here is a 616-residue protein sequence, read N- to C-terminus: 2-isopropylmalate synthase (616 aa).

The interval 1 to 34 (MSPNDAFISAPAKIETPVGPRNEGQPAWNKQRGS) is disordered. A Pyruvate carboxyltransferase domain is found at 67–341 (PQWCAVDLRD…DPQLDFTDIR (275 aa)). Mg(2+) contacts are provided by Asp76, His280, His282, and Asn316. Positions 490–616 (RTAPVEQIAL…NHEAVLAGGV (127 aa)) are regulatory domain.

It belongs to the alpha-IPM synthase/homocitrate synthase family. LeuA type 2 subfamily. Homodimer. Mg(2+) is required as a cofactor.

Its subcellular location is the cytoplasm. The enzyme catalyses 3-methyl-2-oxobutanoate + acetyl-CoA + H2O = (2S)-2-isopropylmalate + CoA + H(+). It participates in amino-acid biosynthesis; L-leucine biosynthesis; L-leucine from 3-methyl-2-oxobutanoate: step 1/4. Inhibited by L-leucine, the pathway end product. Functionally, catalyzes the condensation of the acetyl group of acetyl-CoA with 3-methyl-2-oxobutanoate (2-ketoisovalerate) to form 3-carboxy-3-hydroxy-4-methylpentanoate (2-isopropylmalate). Complements an E.coli leuA deletion. The sequence is that of 2-isopropylmalate synthase from Corynebacterium glutamicum (strain ATCC 13032 / DSM 20300 / JCM 1318 / BCRC 11384 / CCUG 27702 / LMG 3730 / NBRC 12168 / NCIMB 10025 / NRRL B-2784 / 534).